Here is a 98-residue protein sequence, read N- to C-terminus: MSITTLNIMVAFTMALLGMFTYRSHLMSSLLCLEGMMLSLFMLATIVSLNMNFTISFMFPVILLVFAACEAAVGLALLVMVSNTYGMDYIHNLNLLQC.

Helical transmembrane passes span 1-21 (MSIT…GMFT), 29-49 (SLLC…IVSL), and 61-81 (VILL…LVMV).

It belongs to the complex I subunit 4L family. As to quaternary structure, core subunit of respiratory chain NADH dehydrogenase (Complex I) which is composed of 45 different subunits.

The protein resides in the mitochondrion inner membrane. The enzyme catalyses a ubiquinone + NADH + 5 H(+)(in) = a ubiquinol + NAD(+) + 4 H(+)(out). Functionally, core subunit of the mitochondrial membrane respiratory chain NADH dehydrogenase (Complex I) which catalyzes electron transfer from NADH through the respiratory chain, using ubiquinone as an electron acceptor. Part of the enzyme membrane arm which is embedded in the lipid bilayer and involved in proton translocation. The chain is NADH-ubiquinone oxidoreductase chain 4L (MT-ND4L) from Ochotona collaris (Collared pika).